The chain runs to 308 residues: Glutaminase (308 aa).

Substrate is bound by residues serine 66, asparagine 117, glutamate 161, asparagine 168, tyrosine 192, tyrosine 244, and valine 262.

Belongs to the glutaminase family. In terms of assembly, homotetramer.

It carries out the reaction L-glutamine + H2O = L-glutamate + NH4(+). In Yersinia pestis bv. Antiqua (strain Nepal516), this protein is Glutaminase.